We begin with the raw amino-acid sequence, 709 residues long: Polyribonucleotide nucleotidyltransferase (709 aa).

Asp485 and Asp491 together coordinate Mg(2+). Positions 552–611 constitute a KH domain; the sequence is PRIYTMKIDPKKIKDVIGKGGATIRSLTEETGTSIDIDDDGTVKIAAVDSNAAKNVMGRI. The region spanning 621–689 is the S1 motif domain; that stretch reads GAIYKGKVTR…RQGRIRLTMK (69 aa).

Belongs to the polyribonucleotide nucleotidyltransferase family. In terms of assembly, component of the RNA degradosome, which is a multiprotein complex involved in RNA processing and mRNA degradation. Requires Mg(2+) as cofactor.

The protein localises to the cytoplasm. It catalyses the reaction RNA(n+1) + phosphate = RNA(n) + a ribonucleoside 5'-diphosphate. Functionally, involved in mRNA degradation. Catalyzes the phosphorolysis of single-stranded polyribonucleotides processively in the 3'- to 5'-direction. The protein is Polyribonucleotide nucleotidyltransferase of Haemophilus influenzae (strain PittEE).